The chain runs to 301 residues: Probable 2-(5''-triphosphoribosyl)-3'-dephosphocoenzyme-A synthase (301 aa).

Belongs to the CitG/MdcB family.

It catalyses the reaction 3'-dephospho-CoA + ATP = 2'-(5''-triphospho-alpha-D-ribosyl)-3'-dephospho-CoA + adenine. The chain is Probable 2-(5''-triphosphoribosyl)-3'-dephosphocoenzyme-A synthase from Pectobacterium carotovorum subsp. carotovorum (strain PC1).